Consider the following 616-residue polypeptide: Dihydroxy-acid dehydratase 1 (616 aa).

Aspartate 81 lines the Mg(2+) pocket. Cysteine 122 contributes to the [2Fe-2S] cluster binding site. 2 residues coordinate Mg(2+): aspartate 123 and lysine 124. An N6-carboxylysine modification is found at lysine 124. Cysteine 195 contributes to the [2Fe-2S] cluster binding site. Glutamate 491 is a Mg(2+) binding site. Residue serine 517 is the Proton acceptor of the active site.

This sequence belongs to the IlvD/Edd family. In terms of assembly, homodimer. [2Fe-2S] cluster serves as cofactor. Mg(2+) is required as a cofactor.

The catalysed reaction is (2R)-2,3-dihydroxy-3-methylbutanoate = 3-methyl-2-oxobutanoate + H2O. It catalyses the reaction (2R,3R)-2,3-dihydroxy-3-methylpentanoate = (S)-3-methyl-2-oxopentanoate + H2O. It functions in the pathway amino-acid biosynthesis; L-isoleucine biosynthesis; L-isoleucine from 2-oxobutanoate: step 3/4. Its pathway is amino-acid biosynthesis; L-valine biosynthesis; L-valine from pyruvate: step 3/4. In terms of biological role, functions in the biosynthesis of branched-chain amino acids. Catalyzes the dehydration of (2R,3R)-2,3-dihydroxy-3-methylpentanoate (2,3-dihydroxy-3-methylvalerate) into 2-oxo-3-methylpentanoate (2-oxo-3-methylvalerate) and of (2R)-2,3-dihydroxy-3-methylbutanoate (2,3-dihydroxyisovalerate) into 2-oxo-3-methylbutanoate (2-oxoisovalerate), the penultimate precursor to L-isoleucine and L-valine, respectively. This chain is Dihydroxy-acid dehydratase 1, found in Bradyrhizobium diazoefficiens (strain JCM 10833 / BCRC 13528 / IAM 13628 / NBRC 14792 / USDA 110).